The following is a 490-amino-acid chain: ATP synthase subunit beta, plastid (490 aa).

Residue Gly170–Thr177 participates in ATP binding.

Belongs to the ATPase alpha/beta chains family. As to quaternary structure, F-type ATPases have 2 components, CF(1) - the catalytic core - and CF(0) - the membrane proton channel. CF(1) has five subunits: alpha(3), beta(3), gamma(1), delta(1), epsilon(1). CF(0) has four main subunits: a(1), b(1), b'(1) and c(9-12).

It is found in the plastid membrane. The catalysed reaction is ATP + H2O + 4 H(+)(in) = ADP + phosphate + 5 H(+)(out). Functionally, produces ATP from ADP in the presence of a proton gradient across the membrane. The catalytic sites are hosted primarily by the beta subunits. This Cuscuta exaltata (Tall dodder) protein is ATP synthase subunit beta, plastid.